The chain runs to 514 residues: Na(+)/H(+) antiporter NhaB (514 aa).

The next 12 helical transmembrane spans lie at 23–43 (LALLVFLIVNPFIFLANPFIA), 63–83 (PLLPGGLLAIEAVIIGMTSAA), 97–117 (LLLMFMVAGIYFMKQLLLFIF), 120–140 (LLLSIRSKMVLSLAFCVAAAF), 144–164 (FLDALTVVAVVISVAVGFYGI), 202–222 (LMMHAGVGTALGGVMTMVGEP), 238–258 (FFLRMSPVTVPVLVCGLLTCM), 303–323 (AVIGVWLVTALALHLAEVGLI), 357–377 (LTVFFSIVAVIIDQHLFAPII), 391–411 (LFYLFNGLLSSISDNVFVGTI), 447–467 (ATPNGQAAFLFLLTSALAPLI), and 475–495 (VWMALPYTIVLTLIGLLCVEF).

The protein belongs to the NhaB Na(+)/H(+) (TC 2.A.34) antiporter family.

The protein localises to the cell inner membrane. It catalyses the reaction 2 Na(+)(in) + 3 H(+)(out) = 2 Na(+)(out) + 3 H(+)(in). In terms of biological role, na(+)/H(+) antiporter that extrudes sodium in exchange for external protons. The protein is Na(+)/H(+) antiporter NhaB of Salmonella choleraesuis (strain SC-B67).